A 238-amino-acid polypeptide reads, in one-letter code: tRNA (guanine-N(7)-)-methyltransferase (238 aa).

4 residues coordinate S-adenosyl-L-methionine: Glu68, Glu93, Asp120, and Asp143. The active site involves Asp143. Substrate contacts are provided by residues Lys147, Asp179, and 216 to 219 (TKFE).

The protein belongs to the class I-like SAM-binding methyltransferase superfamily. TrmB family.

It carries out the reaction guanosine(46) in tRNA + S-adenosyl-L-methionine = N(7)-methylguanosine(46) in tRNA + S-adenosyl-L-homocysteine. The protein operates within tRNA modification; N(7)-methylguanine-tRNA biosynthesis. Functionally, catalyzes the formation of N(7)-methylguanine at position 46 (m7G46) in tRNA. This chain is tRNA (guanine-N(7)-)-methyltransferase, found in Stutzerimonas stutzeri (strain A1501) (Pseudomonas stutzeri).